We begin with the raw amino-acid sequence, 358 residues long: Fructose-bisphosphate aldolase (358 aa).

Ser-62 serves as a coordination point for D-glyceraldehyde 3-phosphate. Asp-109 serves as the catalytic Proton donor. The Zn(2+) site is built by His-110, Asp-144, Glu-174, and His-226. Gly-227 is a dihydroxyacetone phosphate binding site. His-264 is a Zn(2+) binding site. Dihydroxyacetone phosphate contacts are provided by residues 265-267 (GGS) and 286-289 (NIDT).

This sequence belongs to the class II fructose-bisphosphate aldolase family. Zn(2+) is required as a cofactor.

The enzyme catalyses beta-D-fructose 1,6-bisphosphate = D-glyceraldehyde 3-phosphate + dihydroxyacetone phosphate. The protein operates within carbohydrate degradation; glycolysis; D-glyceraldehyde 3-phosphate and glycerone phosphate from D-glucose: step 4/4. Catalyzes the aldol condensation of dihydroxyacetone phosphate (DHAP or glycerone-phosphate) with glyceraldehyde 3-phosphate (G3P) to form fructose 1,6-bisphosphate (FBP) in gluconeogenesis and the reverse reaction in glycolysis. This chain is Fructose-bisphosphate aldolase (fba), found in Edwardsiella ictaluri (strain 93-146).